The sequence spans 331 residues: Ketol-acid reductoisomerase (NADP(+)) (331 aa).

A KARI N-terminal Rossmann domain is found at 2–182 (ARMYYDADAN…GGTRGGILET (181 aa)). NADP(+) is bound by residues 25-28 (YGSQ), Ser-51, Ser-53, and 83-86 (DDVQ). Residue His-108 is part of the active site. Gly-134 provides a ligand contact to NADP(+). The 146-residue stretch at 183 to 328 (TFREETETDL…KDLRAMFSWL (146 aa)) folds into the KARI C-terminal knotted domain. Mg(2+)-binding residues include Asp-191, Glu-195, Glu-227, and Glu-231. Ser-252 is a substrate binding site.

This sequence belongs to the ketol-acid reductoisomerase family. Mg(2+) serves as cofactor.

It catalyses the reaction (2R)-2,3-dihydroxy-3-methylbutanoate + NADP(+) = (2S)-2-acetolactate + NADPH + H(+). The catalysed reaction is (2R,3R)-2,3-dihydroxy-3-methylpentanoate + NADP(+) = (S)-2-ethyl-2-hydroxy-3-oxobutanoate + NADPH + H(+). The protein operates within amino-acid biosynthesis; L-isoleucine biosynthesis; L-isoleucine from 2-oxobutanoate: step 2/4. Its pathway is amino-acid biosynthesis; L-valine biosynthesis; L-valine from pyruvate: step 2/4. Involved in the biosynthesis of branched-chain amino acids (BCAA). Catalyzes an alkyl-migration followed by a ketol-acid reduction of (S)-2-acetolactate (S2AL) to yield (R)-2,3-dihydroxy-isovalerate. In the isomerase reaction, S2AL is rearranged via a Mg-dependent methyl migration to produce 3-hydroxy-3-methyl-2-ketobutyrate (HMKB). In the reductase reaction, this 2-ketoacid undergoes a metal-dependent reduction by NADPH to yield (R)-2,3-dihydroxy-isovalerate. In Picosynechococcus sp. (strain ATCC 27264 / PCC 7002 / PR-6) (Agmenellum quadruplicatum), this protein is Ketol-acid reductoisomerase (NADP(+)).